The chain runs to 864 residues: Translation initiation factor IF-2 (864 aa).

Residues 1–252 (MEDKNKTIKE…KTSSDKRDFS (252 aa)) form a disordered region. Basic and acidic residues predominate over residues 78-90 (KEVKYEESSRKQD). Residues 106–120 (VRPSGDSSYPVSRSP) show a composition bias toward polar residues. Residues 150-212 (RGPGQGGGYQ…PGNRSGGPGG (63 aa)) are compositionally biased toward gly residues. A compositionally biased stretch (basic and acidic residues) spans 239-252 (HDKEKTSSDKRDFS). In terms of domain architecture, tr-type G spans 359-528 (NRPPVVTIMG…LLQAEVMDLK (170 aa)). The tract at residues 368–375 (GHVDHGKT) is G1. 368–375 (GHVDHGKT) contacts GTP. A G2 region spans residues 393–397 (GITQH). Residues 414–417 (DTPG) form a G3 region. Residues 414 to 418 (DTPGH) and 468 to 471 (NKID) contribute to the GTP site. Positions 468-471 (NKID) are G4. The segment at 504–506 (SAR) is G5.

It belongs to the TRAFAC class translation factor GTPase superfamily. Classic translation factor GTPase family. IF-2 subfamily.

It is found in the cytoplasm. In terms of biological role, one of the essential components for the initiation of protein synthesis. Protects formylmethionyl-tRNA from spontaneous hydrolysis and promotes its binding to the 30S ribosomal subunits. Also involved in the hydrolysis of GTP during the formation of the 70S ribosomal complex. The sequence is that of Translation initiation factor IF-2 from Leptospira borgpetersenii serovar Hardjo-bovis (strain L550).